The chain runs to 505 residues: Serine carboxypeptidase-like 47 (505 aa).

Positions 1–22 (MEAKTFFLFMLFIFSQSWLSTS) are cleaved as a signal peptide. N-linked (GlcNAc...) asparagine glycans are attached at residues Asn37, Asn86, and Asn122. Disulfide bonds link Cys138–Cys378, Cys306–Cys321, and Cys344–Cys349. Residue Ser228 is part of the active site. Asn301 carries N-linked (GlcNAc...) asparagine glycosylation. Asp416 is a catalytic residue. Residues Asn432 and Asn444 are each glycosylated (N-linked (GlcNAc...) asparagine). His473 is an active-site residue.

The protein belongs to the peptidase S10 family. As to expression, expressed in roots, flowers and siliques.

The protein localises to the secreted. Its function is as follows. Probable carboxypeptidase. This Arabidopsis thaliana (Mouse-ear cress) protein is Serine carboxypeptidase-like 47 (SCPL47).